Reading from the N-terminus, the 1403-residue chain is Perilipin-4 (1403 aa).

The segment at 1–21 is disordered; it reads MSASGDGTRVPPKSKGKTLSS. Phosphoserine occurs at positions 25 and 31. The interval 33-70 is disordered; that stretch reads RNLVSHTHSSTSTKDLQTATDPSGTPAPSSKVSTNSQM. Repeat copies occupy residues 104–136, 137–169, 170–202, 203–235, 236–268, 269–301, 302–334, 335–367, 368–400, 401–433, 434–466, 467–499, 500–532, 533–565, 566–598, 599–631, 632–664, 665–697, 698–730, 731–763, 764–796, 797–829, 830–862, 863–895, 896–928, 929–961, 962–994, 995–1027, and 1028–1060. The segment at 104 to 1060 is 29 X 33 AA approximate tandem repeat; the sequence is GVFGIMDAAK…VTSAMNMAKG (957 aa). S1281 carries the post-translational modification Phosphoserine. T1287 is modified (phosphothreonine).

It belongs to the perilipin family. In terms of tissue distribution, specifically expressed in white adipose tissue and also weakly detected in heart and skeletal muscle (at protein level).

It is found in the cell membrane. Its subcellular location is the cytoplasm. The protein resides in the lipid droplet. In terms of biological role, may play a role in triacylglycerol packaging into adipocytes. May function as a coat protein involved in the biogenesis of lipid droplets. This Mus musculus (Mouse) protein is Perilipin-4 (Plin4).